The sequence spans 218 residues: Testis expressed protein 56 (218 aa).

This Rattus norvegicus (Rat) protein is Testis expressed protein 56 (Tex56).